The chain runs to 356 residues: SERTA domain-containing protein 4 (356 aa).

A disordered region spans residues 33–53 (SYGGPSPPGPAQAPLQGDRGA). Positions 101 to 147 (IFEERAHILYMSLEKLKFIDDPEVYLRRSVLINNLMKRIHGEIIMQN) constitute an SERTA domain. Residues 215–232 (TAASSPSASSSSSSSSSS) show a composition bias toward low complexity. 3 disordered regions span residues 215-238 (TAASSPSASSSSSSSSSSPPLPLP), 280-302 (KLNDEKANDDTNRDGGPLSHEPV), and 332-356 (WKKSLRKKEASPPSNKLCCSKGSKI). Basic and acidic residues predominate over residues 280–292 (KLNDEKANDDTNR).

The polypeptide is SERTA domain-containing protein 4 (SERTAD4) (Homo sapiens (Human)).